A 163-amino-acid polypeptide reads, in one-letter code: Beta-lactoglobulin-2 (163 aa).

Cystine bridges form between Cys-66-Cys-161 and Cys-106-Cys-120.

This sequence belongs to the calycin superfamily. Lipocalin family. As to quaternary structure, monomer.

Its subcellular location is the secreted. Its function is as follows. Lactoglobulin is the primary component of whey, it binds retinol and is probably involved in the transport of that molecule. The chain is Beta-lactoglobulin-2 (LGB2) from Equus asinus (Donkey).